Consider the following 483-residue polypeptide: Glutamyl-tRNA(Gln) amidotransferase subunit A (483 aa).

Residues Lys-76 and Ser-151 each act as charge relay system in the active site. Ser-175 serves as the catalytic Acyl-ester intermediate.

It belongs to the amidase family. GatA subfamily. In terms of assembly, heterotrimer of A, B and C subunits.

The catalysed reaction is L-glutamyl-tRNA(Gln) + L-glutamine + ATP + H2O = L-glutaminyl-tRNA(Gln) + L-glutamate + ADP + phosphate + H(+). In terms of biological role, allows the formation of correctly charged Gln-tRNA(Gln) through the transamidation of misacylated Glu-tRNA(Gln) in organisms which lack glutaminyl-tRNA synthetase. The reaction takes place in the presence of glutamine and ATP through an activated gamma-phospho-Glu-tRNA(Gln). The protein is Glutamyl-tRNA(Gln) amidotransferase subunit A of Pseudomonas syringae pv. syringae (strain B728a).